Consider the following 135-residue polypeptide: Lactoylglutathione lyase (135 aa).

A VOC domain is found at arginine 2–alanine 126. Histidine 5 is a Ni(2+) binding site. Arginine 9 lines the substrate pocket. Ni(2+) is bound at residue glutamate 56. Positions 60 and 74 each coordinate substrate. Ni(2+)-binding residues include histidine 74 and glutamate 122. The active-site Proton donor/acceptor is the glutamate 122.

The protein belongs to the glyoxalase I family. In terms of assembly, homodimer. The cofactor is Ni(2+).

The enzyme catalyses (R)-S-lactoylglutathione = methylglyoxal + glutathione. The protein operates within secondary metabolite metabolism; methylglyoxal degradation; (R)-lactate from methylglyoxal: step 1/2. Its function is as follows. Catalyzes the conversion of hemimercaptal, formed from methylglyoxal and glutathione, to S-lactoylglutathione. This chain is Lactoylglutathione lyase (gloA), found in Salmonella typhi.